A 426-amino-acid polypeptide reads, in one-letter code: Serine hydroxymethyltransferase (426 aa).

Residues Leu-118 and Gly-122–Leu-124 contribute to the (6S)-5,6,7,8-tetrahydrofolate site. The residue at position 227 (Lys-227) is an N6-(pyridoxal phosphate)lysine.

This sequence belongs to the SHMT family. As to quaternary structure, homodimer. Pyridoxal 5'-phosphate is required as a cofactor.

The protein resides in the cytoplasm. The enzyme catalyses (6R)-5,10-methylene-5,6,7,8-tetrahydrofolate + glycine + H2O = (6S)-5,6,7,8-tetrahydrofolate + L-serine. Its pathway is one-carbon metabolism; tetrahydrofolate interconversion. It participates in amino-acid biosynthesis; glycine biosynthesis; glycine from L-serine: step 1/1. Its function is as follows. Catalyzes the reversible interconversion of serine and glycine with tetrahydrofolate (THF) serving as the one-carbon carrier. This reaction serves as the major source of one-carbon groups required for the biosynthesis of purines, thymidylate, methionine, and other important biomolecules. Also exhibits THF-independent aldolase activity toward beta-hydroxyamino acids, producing glycine and aldehydes, via a retro-aldol mechanism. The sequence is that of Serine hydroxymethyltransferase from Mycolicibacterium paratuberculosis (strain ATCC BAA-968 / K-10) (Mycobacterium paratuberculosis).